Consider the following 408-residue polypeptide: MKKSGSGKRGPPDGNHQSAAPEKVGWVRKFCGKGIFREIWKNRYVVLKGDQLYVSEKEVKDEKNSQEVFDLSDYEKCEELRKSKSRSKKNHSKFTLARCRQPGTTAPNLIFLAVSPEEKESWINALSSAITRAKNRILDEVTVEEDSYLAHPTRDRAKIQHSRRPPTRGHLMAVASTSTSDGMLTLDLIQEEDPSPEEPASCAESFRVDLDKSVAQLAGSRRRADSDRIQPSSQRASSLSRPWEKPDKGAPYTPQALKKFPSTEKSRCASLEEILSQRDTAPARPLHLQAEESLPPVPAQPGQLSRIQDLVARKLEKTQELLAEVQGLGDGKRKAKDPPQSPPDSESEQLLLETERLLGEASSNWSQAKRVLQEVRELRDLYRQMDLQTPDSHLRQTSQHSQYRKSLM.

The tract at residues 1-21 is disordered; sequence MKKSGSGKRGPPDGNHQSAAP. A PH domain is found at 20-131; that stretch reads APEKVGWVRK…WINALSSAIT (112 aa). The interval 132 to 192 is interaction with capping proteins (CPs); the sequence is RAKNRILDEV…MLTLDLIQEE (61 aa). Residues 135-307 form an interaction with ATM, CKIP, IFP35 and NMI region; sequence NRILDEVTVE…PAQPGQLSRI (173 aa). The interval 217–264 is disordered; that stretch reads LAGSRRRADSDRIQPSSQRASSLSRPWEKPDKGAPYTPQALKKFPSTE. Serine 226 carries the post-translational modification Phosphoserine. A compositionally biased stretch (polar residues) spans 229 to 240; the sequence is IQPSSQRASSLS. 2 positions are modified to phosphoserine: serine 270 and serine 341. The negative regulator of AP-1 activity stretch occupies residues 307 to 408; sequence IQDLVARKLE…QHSQYRKSLM (102 aa). Disordered regions lie at residues 325-348 and 389-408; these read VQGL…SESE and TPDS…KSLM. Residues 389–401 show a composition bias toward polar residues; it reads TPDSHLRQTSQHS.

Heterodimer or homodimer. Interacts with CK2 and actin capping subunits (capping protein CP-alpha and CP-beta). CKIP1 and CK2 together inhibit the activity of actin capping protein at the barbed ends of actin filaments. Interacts with ATM, IFP35, JUN, JUND, NMI and PI3K. Interacts with AKT1, AKT2 and AKT3 (each isozyme of PKB), PtdIns(3,5)P2, PtdIns(4,5)P2 and PtdIns(3,4,5)P2. In terms of processing, C-terminal fragments could be released during apoptosis via caspase-3-dependent cleavage.

Its subcellular location is the cell membrane. The protein localises to the nucleus. The protein resides in the cytoplasm. In terms of biological role, plays a role in the regulation of the actin cytoskeleton through its interactions with actin capping protein (CP). May function to target CK2 to the plasma membrane thereby serving as an adapter to facilitate the phosphorylation of CP by protein kinase 2 (CK2). Appears to target ATM to the plasma membrane. Appears to also inhibit tumor cell growth by inhibiting AKT-mediated cell-survival. Also implicated in PI3K-regulated muscle differentiation, the regulation of AP-1 activity (plasma membrane bound AP-1 regulator that translocates to the nucleus) and the promotion of apoptosis induced by tumor necrosis factor TNF. When bound to PKB, it inhibits it probably by decreasing PKB level of phosphorylation. The chain is Pleckstrin homology domain-containing family O member 1 (Plekho1) from Mus musculus (Mouse).